The primary structure comprises 267 residues: NAD kinase 2 (267 aa).

D52 functions as the Proton acceptor in the catalytic mechanism. NAD(+) contacts are provided by residues 52-53 (DG), 124-125 (NE), R151, D153, 164-169 (TGYNKS), and A188.

This sequence belongs to the NAD kinase family. It depends on a divalent metal cation as a cofactor.

It is found in the cytoplasm. The enzyme catalyses NAD(+) + ATP = ADP + NADP(+) + H(+). In terms of biological role, involved in the regulation of the intracellular balance of NAD and NADP, and is a key enzyme in the biosynthesis of NADP. Catalyzes specifically the phosphorylation on 2'-hydroxyl of the adenosine moiety of NAD to yield NADP. This Geobacillus kaustophilus (strain HTA426) protein is NAD kinase 2.